The primary structure comprises 386 residues: tRNA N6-adenosine threonylcarbamoyltransferase (386 aa).

His141, His145, and Tyr162 together coordinate a divalent metal cation. Substrate contacts are provided by residues 162–166 (YVSGG), Asp194, Gly209, Glu213, and Asn315. Residue Asp344 coordinates a divalent metal cation.

This sequence belongs to the KAE1 / TsaD family. As to quaternary structure, component of the EKC/KEOPS complex composed of at least BUD32, CGI121, GON7, KAE1 and PCC1; the whole complex dimerizes. Requires a divalent metal cation as cofactor.

It is found in the cytoplasm. The protein resides in the nucleus. The catalysed reaction is L-threonylcarbamoyladenylate + adenosine(37) in tRNA = N(6)-L-threonylcarbamoyladenosine(37) in tRNA + AMP + H(+). Its function is as follows. Component of the EKC/KEOPS complex that is required for the formation of a threonylcarbamoyl group on adenosine at position 37 (t(6)A37) in tRNAs that read codons beginning with adenine. The complex is probably involved in the transfer of the threonylcarbamoyl moiety of threonylcarbamoyl-AMP (TC-AMP) to the N6 group of A37. KAE1 likely plays a direct catalytic role in this reaction, but requires other protein(s) of the complex to fulfill this activity. The EKC/KEOPS complex also promotes both telomere uncapping and telomere elongation. The complex is required for efficient recruitment of transcriptional coactivators. This is tRNA N6-adenosine threonylcarbamoyltransferase from Saccharomyces cerevisiae (strain ATCC 204508 / S288c) (Baker's yeast).